The chain runs to 351 residues: Ribonucleoside-diphosphate reductase subunit beta (351 aa).

Fe cation contacts are provided by Asp94, Glu124, and His127. The active site involves Tyr131. Fe cation is bound by residues Glu191, Glu225, and His228.

The protein belongs to the ribonucleoside diphosphate reductase small chain family. In terms of assembly, tetramer of two alpha and two beta subunits. Requires Fe cation as cofactor.

The catalysed reaction is a 2'-deoxyribonucleoside 5'-diphosphate + [thioredoxin]-disulfide + H2O = a ribonucleoside 5'-diphosphate + [thioredoxin]-dithiol. Functionally, provides the precursors necessary for DNA synthesis. Catalyzes the biosynthesis of deoxyribonucleotides from the corresponding ribonucleotides. This is Ribonucleoside-diphosphate reductase subunit beta (nrdB) from Treponema pallidum (strain Nichols).